The primary structure comprises 184 residues: ATP synthase subunit delta (184 aa).

This sequence belongs to the ATPase delta chain family. In terms of assembly, F-type ATPases have 2 components, F(1) - the catalytic core - and F(0) - the membrane proton channel. F(1) has five subunits: alpha(3), beta(3), gamma(1), delta(1), epsilon(1). CF(0) has four main subunits: a(1), b(1), b'(1) and c(10-14). The alpha and beta chains form an alternating ring which encloses part of the gamma chain. F(1) is attached to F(0) by a central stalk formed by the gamma and epsilon chains, while a peripheral stalk is formed by the delta, b and b' chains.

It is found in the cellular thylakoid membrane. Functionally, f(1)F(0) ATP synthase produces ATP from ADP in the presence of a proton or sodium gradient. F-type ATPases consist of two structural domains, F(1) containing the extramembraneous catalytic core and F(0) containing the membrane proton channel, linked together by a central stalk and a peripheral stalk. During catalysis, ATP synthesis in the catalytic domain of F(1) is coupled via a rotary mechanism of the central stalk subunits to proton translocation. Its function is as follows. This protein is part of the stalk that links CF(0) to CF(1). It either transmits conformational changes from CF(0) to CF(1) or is implicated in proton conduction. This is ATP synthase subunit delta from Nostoc punctiforme (strain ATCC 29133 / PCC 73102).